The chain runs to 262 residues: tRNA pseudouridine synthase A (262 aa).

Residue D52 is the Nucleophile of the active site. Y110 serves as a coordination point for substrate.

Belongs to the tRNA pseudouridine synthase TruA family. As to quaternary structure, homodimer.

The enzyme catalyses uridine(38/39/40) in tRNA = pseudouridine(38/39/40) in tRNA. Its function is as follows. Formation of pseudouridine at positions 38, 39 and 40 in the anticodon stem and loop of transfer RNAs. The polypeptide is tRNA pseudouridine synthase A (Chromobacterium violaceum (strain ATCC 12472 / DSM 30191 / JCM 1249 / CCUG 213 / NBRC 12614 / NCIMB 9131 / NCTC 9757 / MK)).